The primary structure comprises 120 residues: UPF0231 protein YacL (120 aa).

It belongs to the UPF0231 family.

The sequence is that of UPF0231 protein YacL from Salmonella agona (strain SL483).